A 274-amino-acid polypeptide reads, in one-letter code: Putative pyruvate, phosphate dikinase regulatory protein (274 aa).

Gly-149–Thr-156 provides a ligand contact to ADP.

It belongs to the pyruvate, phosphate/water dikinase regulatory protein family. PDRP subfamily.

It catalyses the reaction N(tele)-phospho-L-histidyl/L-threonyl-[pyruvate, phosphate dikinase] + ADP = N(tele)-phospho-L-histidyl/O-phospho-L-threonyl-[pyruvate, phosphate dikinase] + AMP + H(+). The catalysed reaction is N(tele)-phospho-L-histidyl/O-phospho-L-threonyl-[pyruvate, phosphate dikinase] + phosphate + H(+) = N(tele)-phospho-L-histidyl/L-threonyl-[pyruvate, phosphate dikinase] + diphosphate. Functionally, bifunctional serine/threonine kinase and phosphorylase involved in the regulation of the pyruvate, phosphate dikinase (PPDK) by catalyzing its phosphorylation/dephosphorylation. The polypeptide is Putative pyruvate, phosphate dikinase regulatory protein (Rhizorhabdus wittichii (strain DSM 6014 / CCUG 31198 / JCM 15750 / NBRC 105917 / EY 4224 / RW1) (Sphingomonas wittichii)).